The sequence spans 523 residues: NAD(P)H-quinone oxidoreductase subunit 2 (523 aa).

The next 14 membrane-spanning stretches (helical) occupy residues 29–49, 57–77, 94–114, 123–143, 147–167, 182–202, 223–243, 255–275, 291–311, 317–337, 345–365, 389–409, 424–444, and 477–497; these read AIAP…VDLA, WVPP…AQQW, LAIS…LISW, PIGE…LLCG, LVSV…LAGY, LLVG…LYGL, AALS…AVPF, PTPV…ALAL, LLFT…ALAQ, MLAY…VCGT, VLYM…IILF, LGLS…GFFG, LLVV…ISVI, and IALV…NPLF.

The protein belongs to the complex I subunit 2 family. As to quaternary structure, NDH-1 can be composed of about 15 different subunits; different subcomplexes with different compositions have been identified which probably have different functions.

Its subcellular location is the cellular thylakoid membrane. It carries out the reaction a plastoquinone + NADH + (n+1) H(+)(in) = a plastoquinol + NAD(+) + n H(+)(out). The catalysed reaction is a plastoquinone + NADPH + (n+1) H(+)(in) = a plastoquinol + NADP(+) + n H(+)(out). Its function is as follows. NDH-1 shuttles electrons from an unknown electron donor, via FMN and iron-sulfur (Fe-S) centers, to quinones in the respiratory and/or the photosynthetic chain. The immediate electron acceptor for the enzyme in this species is believed to be plastoquinone. Couples the redox reaction to proton translocation, and thus conserves the redox energy in a proton gradient. Cyanobacterial NDH-1 also plays a role in inorganic carbon-concentration. In Prochlorococcus marinus (strain MIT 9313), this protein is NAD(P)H-quinone oxidoreductase subunit 2.